The chain runs to 2835 residues: Vanchrobactin synthetase VabF (2835 aa).

Residues 16–452 form a condensation 1 region; that stretch reads EDQWPLIGTQ…IPPSEKQQIT (437 aa). Positions 473–880 are adenylation 1; that stretch reads QQTVESKPNE…GRCDHQIKIR (408 aa). One can recognise a Carrier 1 domain in the interval 988–1062; it reads APITQPEQLL…MMAGQMVPLQ (75 aa). Position 1023 is an O-(pantetheine 4'-phosphoryl)serine (Ser-1023). Condensation stretches follow at residues 1081–1499 and 1539–1961; these read WFEE…KIQQ and DVLP…EWDL. The adenylation 2 stretch occupies residues 1992-2394; that stretch reads QQQRSPHQLA…GRSDDQIKIR (403 aa). A Carrier 2 domain is found at 2503–2578; it reads NAHPGLETQL…KLASLLLDDD (76 aa). Ser-2538 bears the O-(pantetheine 4'-phosphoryl)serine mark. The thioesterase stretch occupies residues 2601–2821; sequence ALFCVNSASG…APENVRQIGE (221 aa).

It belongs to the NRP synthetase family. The cofactor is pantetheine 4'-phosphate.

The catalysed reaction is holo-[peptidyl-carrier protein] + L-arginine + ATP = L-arginyl-[peptidyl-carrier protein] + AMP + diphosphate. The enzyme catalyses holo-[peptidyl-carrier protein] + L-serine + ATP = L-seryl-[peptidyl-carrier protein] + AMP + diphosphate. The protein operates within siderophore biosynthesis. Its function is as follows. Involved in the synthesis of the siderophore vanchrobactin. Probably adenylates L-arginine via its first adenylation domain and loads it onto its first peptidyl carrier domain via a thioester linkage to the phosphopanthetheine moiety. In addition, may adenylate L-serine via its second adenylation domain and loads it onto its second peptidyl carrier domain via a thioester linkage to the phosphopanthetheine moiety. The thioesterase domain may release vanchrobactin after condensation of the siderophore components. This is Vanchrobactin synthetase VabF from Vibrio anguillarum (Listonella anguillarum).